The sequence spans 193 residues: UPF0301 protein Fphi_1754 (193 aa).

Belongs to the UPF0301 (AlgH) family.

In Francisella philomiragia subsp. philomiragia (strain ATCC 25017 / CCUG 19701 / FSC 153 / O#319-036), this protein is UPF0301 protein Fphi_1754.